The primary structure comprises 417 residues: Histidine--tRNA ligase (417 aa).

It belongs to the class-II aminoacyl-tRNA synthetase family. As to quaternary structure, homodimer.

It is found in the cytoplasm. It catalyses the reaction tRNA(His) + L-histidine + ATP = L-histidyl-tRNA(His) + AMP + diphosphate + H(+). The sequence is that of Histidine--tRNA ligase from Oleidesulfovibrio alaskensis (strain ATCC BAA-1058 / DSM 17464 / G20) (Desulfovibrio alaskensis).